We begin with the raw amino-acid sequence, 399 residues long: N-acetylglucosamine-6-phosphate deacetylase (399 aa).

The a divalent metal cation site is built by His-65, His-67, and Glu-135. 146–147 (AH) is a substrate binding site. Positions 201 and 222 each coordinate a divalent metal cation. Substrate is bound by residues 225–226 (NG), Arg-233, and 254–257 (DGHH). Residue Asp-279 participates in a divalent metal cation binding. Asp-279 functions as the Proton donor/acceptor in the catalytic mechanism. 312-314 (LAG) is a substrate binding site.

This sequence belongs to the metallo-dependent hydrolases superfamily. NagA family. As to quaternary structure, homodimer. A divalent metal cation is required as a cofactor.

It carries out the reaction N-acetyl-D-glucosamine 6-phosphate + H2O = D-glucosamine 6-phosphate + acetate. The protein operates within amino-sugar metabolism; N-acetylneuraminate degradation; D-fructose 6-phosphate from N-acetylneuraminate: step 4/5. Involved in the first committed step in the biosynthesis of amino-sugar-nucleotides. Catalyzes the hydrolysis of the N-acetyl group of N-acetylglucosamine-6-phosphate (GlcNAc-6-P) to yield glucosamine 6-phosphate and acetate. In Vibrio furnissii, this protein is N-acetylglucosamine-6-phosphate deacetylase (manD).